A 116-amino-acid chain; its full sequence is Flagellar transcriptional regulator FlhD (116 aa).

This sequence belongs to the FlhD family. In terms of assembly, homodimer; disulfide-linked. Forms a heterohexamer composed of two FlhC and four FlhD subunits. Each FlhC binds a FlhD dimer, forming a heterotrimer, and a hexamer assembles by dimerization of two heterotrimers.

The protein localises to the cytoplasm. Its function is as follows. Functions in complex with FlhC as a master transcriptional regulator that regulates transcription of several flagellar and non-flagellar operons by binding to their promoter region. Activates expression of class 2 flagellar genes, including fliA, which is a flagellum-specific sigma factor that turns on the class 3 genes. Also regulates genes whose products function in a variety of physiological pathways. This chain is Flagellar transcriptional regulator FlhD, found in Pantoea ananatis (strain LMG 20103).